The primary structure comprises 273 residues: Ribosomal RNA small subunit methyltransferase A (273 aa).

Residues Asn-23, Ile-25, Gly-50, Glu-72, Asp-97, and Asn-116 each contribute to the S-adenosyl-L-methionine site.

It belongs to the class I-like SAM-binding methyltransferase superfamily. rRNA adenine N(6)-methyltransferase family. RsmA subfamily.

The protein resides in the cytoplasm. The catalysed reaction is adenosine(1518)/adenosine(1519) in 16S rRNA + 4 S-adenosyl-L-methionine = N(6)-dimethyladenosine(1518)/N(6)-dimethyladenosine(1519) in 16S rRNA + 4 S-adenosyl-L-homocysteine + 4 H(+). Its function is as follows. Specifically dimethylates two adjacent adenosines (A1518 and A1519) in the loop of a conserved hairpin near the 3'-end of 16S rRNA in the 30S particle. May play a critical role in biogenesis of 30S subunits. The protein is Ribosomal RNA small subunit methyltransferase A of Rickettsia akari (strain Hartford).